A 475-amino-acid chain; its full sequence is Ribulose bisphosphate carboxylase large chain (475 aa).

Positions 1 to 2 are excised as a propeptide; it reads MS. Position 3 is an N-acetylproline (Pro-3). At Lys-14 the chain carries N6,N6,N6-trimethyllysine. Residues Asn-123 and Thr-173 each contribute to the substrate site. Lys-175 acts as the Proton acceptor in catalysis. Residue Lys-177 participates in substrate binding. Mg(2+)-binding residues include Lys-201, Asp-203, and Glu-204. Lys-201 carries the N6-carboxylysine modification. His-294 acts as the Proton acceptor in catalysis. Residues Arg-295, His-327, and Ser-379 each coordinate substrate.

The protein belongs to the RuBisCO large chain family. Type I subfamily. As to quaternary structure, heterohexadecamer of 8 large chains and 8 small chains; disulfide-linked. The disulfide link is formed within the large subunit homodimers. Mg(2+) is required as a cofactor. In terms of processing, the disulfide bond which can form in the large chain dimeric partners within the hexadecamer appears to be associated with oxidative stress and protein turnover.

It localises to the plastid. The protein resides in the chloroplast. The catalysed reaction is 2 (2R)-3-phosphoglycerate + 2 H(+) = D-ribulose 1,5-bisphosphate + CO2 + H2O. It catalyses the reaction D-ribulose 1,5-bisphosphate + O2 = 2-phosphoglycolate + (2R)-3-phosphoglycerate + 2 H(+). Functionally, ruBisCO catalyzes two reactions: the carboxylation of D-ribulose 1,5-bisphosphate, the primary event in carbon dioxide fixation, as well as the oxidative fragmentation of the pentose substrate in the photorespiration process. Both reactions occur simultaneously and in competition at the same active site. This is Ribulose bisphosphate carboxylase large chain from Ostrya virginiana (American hophornbeam).